Consider the following 239-residue polypeptide: Cysteine-rich venom protein ENH1 (239 aa).

A signal peptide spans 1-18; the sequence is MIVFILLSLAAVLQQFVA. The SCP domain maps to 37 to 165; sequence VDMHNSFRRS…PYNYFYVCQY (129 aa). 7 cysteine pairs are disulfide-bonded: C74-C152, C91-C166, C147-C163, C185-C192, C188-C197, C210-C228, and C219-C232. Residues 201-234 enclose the ShKT domain; sequence CPITNTFTNCDSLLQQNSCEDSYIKTNCGASCFC.

The protein belongs to the CRISP family. Expressed by the venom gland.

The protein resides in the secreted. In terms of biological role, blocks contraction of smooth muscle elicited by high potassium-induced depolarization, but does not block caffeine-stimulated contraction. May target voltage-gated calcium channels on smooth muscle. The sequence is that of Cysteine-rich venom protein ENH1 from Pseudoferania polylepis (Macleay's water snake).